A 152-amino-acid chain; its full sequence is Large ribosomal subunit protein uL22 (152 aa).

Belongs to the universal ribosomal protein uL22 family. Part of the 50S ribosomal subunit.

In terms of biological role, this protein binds specifically to 23S rRNA. It makes multiple contacts with different domains of the 23S rRNA in the assembled 50S subunit and ribosome. Its function is as follows. The globular domain of the protein is located near the polypeptide exit tunnel on the outside of the subunit, while an extended beta-hairpin is found that lines the wall of the exit tunnel in the center of the 70S ribosome. This chain is Large ribosomal subunit protein uL22, found in Nitrosopumilus maritimus (strain SCM1).